Here is a 495-residue protein sequence, read N- to C-terminus: Divinyl ether synthase CYP74M3 (495 aa).

Cysteine 446 serves as a coordination point for heme.

It belongs to the cytochrome P450 family. It depends on heme as a cofactor.

It catalyses the reaction (13S)-hydroperoxy-(9Z,11E)-octadecadienoate = etheroleate + H2O. The enzyme catalyses (13S)-hydroperoxy-(9Z,11E,15Z)-octadecatrienoate = etherolenate + H2O. Its pathway is lipid metabolism; oxylipin biosynthesis. Functionally, divinyl ether synthase involved in oxylipin biosynthesis. Catalyzes the conversion of (13S)-hydroperoxy-(9Z,11E)-octadecadienoate (13-HPOD) to etheroleate and (13S)-hydroperoxy-(9Z,11E,15Z)-octadecatrienoate (13-HPOT) to etherolenate. Has no activity with the corresponding 9-hydroperoxides (9-HPOD and 9-HPOT). This is Divinyl ether synthase CYP74M3 from Selaginella moellendorffii (Spikemoss).